A 375-amino-acid chain; its full sequence is Trichodiene synthase (375 aa).

It belongs to the trichodiene synthase family.

It catalyses the reaction (2E,6E)-farnesyl diphosphate = trichodiene + diphosphate. The protein operates within sesquiterpene biosynthesis; trichothecene biosynthesis. Its function is as follows. TS is a member of the terpene cyclase group of enzymes. It catalyzes the isomerization and cyclization of farnesyl pyro-phosphate to form trichodiene, the first cyclic intermediate in the biosynthetic pathway for trichothecenes. It serves to branch trichothecene biosynthesis from the isoprenoid pathway. The sequence is that of Trichodiene synthase (TRI5) from Fusarium culmorum.